A 178-amino-acid chain; its full sequence is Large ribosomal subunit protein uL6 (178 aa).

This sequence belongs to the universal ribosomal protein uL6 family. Part of the 50S ribosomal subunit.

In terms of biological role, this protein binds to the 23S rRNA, and is important in its secondary structure. It is located near the subunit interface in the base of the L7/L12 stalk, and near the tRNA binding site of the peptidyltransferase center. This is Large ribosomal subunit protein uL6 from Buchnera aphidicola subsp. Acyrthosiphon pisum (strain APS) (Acyrthosiphon pisum symbiotic bacterium).